Reading from the N-terminus, the 132-residue chain is Interleukin-13 (132 aa).

A signal peptide spans 1–18; the sequence is MALLLTTVIALTCLGGFA. Residues asparagine 38, asparagine 49, asparagine 57, and asparagine 72 are each glycosylated (N-linked (GlcNAc...) asparagine). Cystine bridges form between cysteine 48-cysteine 76 and cysteine 64-cysteine 90.

The protein belongs to the IL-4/IL-13 family. As to quaternary structure, interacts with IL13RA2.

The protein resides in the secreted. Cytokine that plays important roles in allergic inflammation and immune response to parasite infection. Synergizes with IL2 in regulating interferon-gamma synthesis. Stimulates B-cell proliferation, and activation of eosinophils, basophils, and mast cells. Plays an important role in controlling IL33 activity by modulating the production of transmembrane and soluble forms of interleukin-1 receptor-like 1/IL1RL1. Displays the capacity to antagonize Th1-driven proinflammatory immune response and downregulates synthesis of many proinflammatory cytokines including IL1, IL6, IL10, IL12 and TNF-alpha through a mechanism that partially involves suppression of NF-kappa-B. Also functions on nonhematopoietic cells, including endothelial cells where it induces vascular cell adhesion protein 1/VCAM1, which is important in the recruitment of eosinophils. Exerts its biological effects through its receptors which comprises the IL4R chain and the IL13RA1 chain, to activate JAK1 and TYK2, leading to the activation of STAT6. Aside from IL13RA1, another receptor IL13RA2 acts as a high affinity decoy for IL13 and mediates internalization and depletion of extracellular IL13. The sequence is that of Interleukin-13 (IL13) from Pan troglodytes (Chimpanzee).